The following is a 179-amino-acid chain: ATP synthase subunit delta (179 aa).

Belongs to the ATPase delta chain family. In terms of assembly, F-type ATPases have 2 components, F(1) - the catalytic core - and F(0) - the membrane proton channel. F(1) has five subunits: alpha(3), beta(3), gamma(1), delta(1), epsilon(1). F(0) has three main subunits: a(1), b(2) and c(10-14). The alpha and beta chains form an alternating ring which encloses part of the gamma chain. F(1) is attached to F(0) by a central stalk formed by the gamma and epsilon chains, while a peripheral stalk is formed by the delta and b chains.

Its subcellular location is the cell inner membrane. Functionally, f(1)F(0) ATP synthase produces ATP from ADP in the presence of a proton or sodium gradient. F-type ATPases consist of two structural domains, F(1) containing the extramembraneous catalytic core and F(0) containing the membrane proton channel, linked together by a central stalk and a peripheral stalk. During catalysis, ATP synthesis in the catalytic domain of F(1) is coupled via a rotary mechanism of the central stalk subunits to proton translocation. This protein is part of the stalk that links CF(0) to CF(1). It either transmits conformational changes from CF(0) to CF(1) or is implicated in proton conduction. The protein is ATP synthase subunit delta of Acidithiobacillus ferridurans.